Here is a 516-residue protein sequence, read N- to C-terminus: Maturase K (516 aa).

This sequence belongs to the intron maturase 2 family. MatK subfamily.

The protein localises to the plastid. It localises to the chloroplast. Functionally, usually encoded in the trnK tRNA gene intron. Probably assists in splicing its own and other chloroplast group II introns. This Chara connivens (Convergent stonewort) protein is Maturase K.